A 690-amino-acid polypeptide reads, in one-letter code: MLYASQRGRLTENLRNALQQDSTTQGCLGAETPSIMYTGAKSDRWAHPLVGTIHASNLYCPMLRAYCRHYGPRPVFVASDESLPMFGASPALHTPVQVQMCLLPELRDTLQRLLPPPNLEDSEALTEFKTSVSSARAILEDPNFLEMREFVTSLASFLSGQYKHKPARLEAFQKQVVLHSFYFLISIKSLEITDTMFDIFQSAFGLEEMTLEKLHIFKQKASVFLIPRRHGKTWIVVAIISLILSNLSNVQIGYVAHQKHVASAVFTEIIDTLTKSFDSKRVEVNKETSTITFRHSGKISSTVMCATCFNKNSIRGQTFHLLFVDEANFIKKEALPAILGFMLQKDAKIIFISSVNSADQATSFLYKLKDAQERLLNVVSYVCQEHRQDFDMQDSMVSCPCFRLHIPSYITMDSNIRATTNLFLDGAFSTELMGDTSSLSQGSLSRTVRDDAINQLELCRVDTLNPRVAGRLASSLYVYVDPAYTNNTSASGTGIAAVTHDRADPNRVIVLGLEHFFLKDLTGDAALQIATCVVALVSSIVTLHPHLEEVKVAVEGNSSQDSAVAIASIIGESCPLPCAFVHTKDKTSSLQWPMYLLTNEKSKAFERLIYAVNTASLSASQVTVSNTIQLSFDPVLYLISQIRAIKPIPLRDGTYTYTGKQRNLSDDVLVALVMAHFLATTQKHTFKKVH.

Positions 226-233 (IPRRHGKT) match the Walker A motif motif. A Walker B motif motif is present at residues 321–326 (LLFVDE). The active-site For ATPase activity is glutamate 326. Active-site for nuclease activity residues include aspartate 481, glutamate 555, and aspartate 667.

It belongs to the herpesviridae TRM3 protein family. In terms of assembly, interacts with the terminase subunits TRM1 and TRM2. Interacts with portal protein.

It localises to the host nucleus. Functionally, component of the molecular motor that translocates viral genomic DNA in empty capsid during DNA packaging. Forms a tripartite terminase complex together with TRM1 and TRM2 in the host cytoplasm. Once the complex reaches the host nucleus, it interacts with the capsid portal vertex. This portal forms a ring in which genomic DNA is translocated into the capsid. TRM3 carries an RNase H-like nuclease activity that plays an important role for the cleavage of concatemeric viral DNA into unit length genomes. This Homo sapiens (Human) protein is Tripartite terminase subunit 3.